The primary structure comprises 306 residues: Ornithine carbamoyltransferase (306 aa).

Carbamoyl phosphate is bound by residues 46 to 49 (STRT), Q73, R97, and 124 to 127 (HPTQ). L-ornithine is bound by residues N156, D220, and 224–225 (SM). Residues 260–261 (CL) and R288 each bind carbamoyl phosphate.

Belongs to the aspartate/ornithine carbamoyltransferase superfamily. OTCase family.

The protein localises to the cytoplasm. It carries out the reaction carbamoyl phosphate + L-ornithine = L-citrulline + phosphate + H(+). It functions in the pathway amino-acid degradation; L-arginine degradation via ADI pathway; carbamoyl phosphate from L-arginine: step 2/2. Reversibly catalyzes the transfer of the carbamoyl group from carbamoyl phosphate (CP) to the N(epsilon) atom of ornithine (ORN) to produce L-citrulline. This Campylobacter jejuni subsp. doylei (strain ATCC BAA-1458 / RM4099 / 269.97) protein is Ornithine carbamoyltransferase.